The following is a 223-amino-acid chain: Putative HTLV-1-related endogenous sequence (223 aa).

Residues 1–19 (MRCAHAPAPRTRYPTRAPS) show a composition bias toward low complexity. The segment at 1–184 (MRCAHAPAPR…ARAHGEAGAG (184 aa)) is disordered. The segment covering 115–126 (GDRRREGPDRSP) has biased composition (basic and acidic residues). Residues 133–157 (PAAAAQPDSSSAQAPGPSTLRPAAT) are compositionally biased toward low complexity.

The chain is Putative HTLV-1-related endogenous sequence (HRES1) from Homo sapiens (Human).